A 634-amino-acid polypeptide reads, in one-letter code: Chaperone protein DnaK 2 (634 aa).

The residue at position 197 (threonine 197) is a Phosphothreonine; by autocatalysis. Over residues 600-620 (ASAEASANAQAGPSSSSSSSS) the composition is skewed to low complexity. The disordered stretch occupies residues 600–634 (ASAEASANAQAGPSSSSSSSSGDDDVIDAEFSESK). Acidic residues predominate over residues 621-634 (GDDDVIDAEFSESK).

This sequence belongs to the heat shock protein 70 family.

In terms of biological role, acts as a chaperone. This is Chaperone protein DnaK 2 from Synechococcus sp. (strain ATCC 27144 / PCC 6301 / SAUG 1402/1) (Anacystis nidulans).